A 284-amino-acid chain; its full sequence is Halorhodopsin (284 aa).

The Extracellular portion of the chain corresponds to M1 to S30. Residues D31–G56 form a helical membrane-spanning segment. Over R57–P62 the chain is Cytoplasmic. The chain crosses the membrane as a helical span at residues R63 to V86. Topologically, residues S87 to P110 are extracellular. The chain crosses the membrane as a helical span at residues W111–A132. The Cytoplasmic portion of the chain corresponds to G133 to N135. The chain crosses the membrane as a helical span at residues T136–T159. Residues T160 to S162 are Extracellular-facing. The chain crosses the membrane as a helical span at residues Y163 to L185. Residues A186 to T197 are Cytoplasmic-facing. A helical membrane pass occupies residues A198–L221. Topologically, residues G222–D230 are extracellular. Residues V231–N259 form a helical membrane-spanning segment. Position 246 is an N6-(retinylidene)lysine (K246). The Cytoplasmic segment spans residues N260 to D284.

The protein belongs to the archaeal/bacterial/fungal opsin family.

The protein localises to the cell membrane. Light-driven chloride pump. The chain is Halorhodopsin (hop) from Halobacterium sp. (strain SG1).